Reading from the N-terminus, the 215-residue chain is MNKYLEYPEVESKETPPQKLVVLLHGIGSDGHDLIGLVPYIKNDLQNCHFISPHGIEDYDMMPYGRQWFSLRDRSPHIIATLIANNISKLEDIIREKQTELNLTNKDTVIIGFSQGTMIGLYLTLVQQAPFFCTIGFAGALIPPMKINNKLTPICLIHGALDQVIDVSEMYNASNYLSKLNIEHSVHKLTSLAHSIDGRGLEIAINFINTCHNMV.

Active-site charge relay system residues include S114, D162, and H194.

It belongs to the AB hydrolase superfamily. AB hydrolase 2 family.

This is an uncharacterized protein from Rickettsia typhi (strain ATCC VR-144 / Wilmington).